We begin with the raw amino-acid sequence, 151 residues long: UPF0208 membrane protein YfbV (151 aa).

2 consecutive transmembrane segments (helical) span residues 46 to 65 and 69 to 91; these read YAIR…QIAL and LGPA…WWLG.

Belongs to the UPF0208 family.

The protein resides in the cell inner membrane. The chain is UPF0208 membrane protein YfbV from Shigella boydii serotype 18 (strain CDC 3083-94 / BS512).